The following is a 112-amino-acid chain: uncharacterized protein (112 aa).

2 consecutive transmembrane segments (helical) span residues 55–75 (LLEI…PTLF) and 91–111 (LIML…LLLL).

It is found in the membrane. This is an uncharacterized protein from Saccharomyces cerevisiae (strain ATCC 204508 / S288c) (Baker's yeast).